Here is a 478-residue protein sequence, read N- to C-terminus: Ankyrin repeat and BTB/POZ domain-containing protein 1 (478 aa).

ANK repeat units lie at residues 1-31 and 35-64; these read MDTS…EVNV and WDST…RCEA. 2 BTB domains span residues 115–182 and 272–346; these read SDVV…DIGV and PDIC…ELSP. Residues 451 to 477 are a coiled coil; that stretch reads VQTYSAIEEAQQRLRALEDLLVSIGLD.

As to expression, ubiquitously expressed in all fetal tissues examined including heart, brain, liver, and kidney. Also expressed at lower levels in both adult heart and hypertrophic heart.

Its subcellular location is the cytoplasm. May act as a mediator of the PTEN growth-suppressive signaling pathway. May play a role in developmental processes. The polypeptide is Ankyrin repeat and BTB/POZ domain-containing protein 1 (Homo sapiens (Human)).